The sequence spans 227 residues: Enolase-phosphatase E1 (227 aa).

Belongs to the HAD-like hydrolase superfamily. MasA/MtnC family. Monomer. Mg(2+) serves as cofactor.

The enzyme catalyses 5-methylsulfanyl-2,3-dioxopentyl phosphate + H2O = 1,2-dihydroxy-5-(methylsulfanyl)pent-1-en-3-one + phosphate. Its pathway is amino-acid biosynthesis; L-methionine biosynthesis via salvage pathway; L-methionine from S-methyl-5-thio-alpha-D-ribose 1-phosphate: step 3/6. It participates in amino-acid biosynthesis; L-methionine biosynthesis via salvage pathway; L-methionine from S-methyl-5-thio-alpha-D-ribose 1-phosphate: step 4/6. Its function is as follows. Bifunctional enzyme that catalyzes the enolization of 2,3-diketo-5-methylthiopentyl-1-phosphate (DK-MTP-1-P) into the intermediate 2-hydroxy-3-keto-5-methylthiopentenyl-1-phosphate (HK-MTPenyl-1-P), which is then dephosphorylated to form the acireductone 1,2-dihydroxy-3-keto-5-methylthiopentene (DHK-MTPene). The sequence is that of Enolase-phosphatase E1 from Azotobacter vinelandii (strain DJ / ATCC BAA-1303).